The following is a 265-amino-acid chain: Acyl-[acyl-carrier-protein]--UDP-N-acetylglucosamine O-acyltransferase (265 aa).

The protein belongs to the transferase hexapeptide repeat family. LpxA subfamily. In terms of assembly, homotrimer.

The protein resides in the cytoplasm. The catalysed reaction is a (3R)-hydroxyacyl-[ACP] + UDP-N-acetyl-alpha-D-glucosamine = a UDP-3-O-[(3R)-3-hydroxyacyl]-N-acetyl-alpha-D-glucosamine + holo-[ACP]. The protein operates within glycolipid biosynthesis; lipid IV(A) biosynthesis; lipid IV(A) from (3R)-3-hydroxytetradecanoyl-[acyl-carrier-protein] and UDP-N-acetyl-alpha-D-glucosamine: step 1/6. In terms of biological role, involved in the biosynthesis of lipid A, a phosphorylated glycolipid that anchors the lipopolysaccharide to the outer membrane of the cell. The chain is Acyl-[acyl-carrier-protein]--UDP-N-acetylglucosamine O-acyltransferase from Polynucleobacter asymbioticus (strain DSM 18221 / CIP 109841 / QLW-P1DMWA-1) (Polynucleobacter necessarius subsp. asymbioticus).